A 582-amino-acid chain; its full sequence is L-fucose isomerase (582 aa).

Residues Glu-333 and Asp-357 each act as proton acceptor in the active site. 3 residues coordinate Mn(2+): Glu-333, Asp-357, and His-520.

The protein belongs to the L-fucose isomerase family. Requires Mn(2+) as cofactor.

It localises to the cytoplasm. The enzyme catalyses L-fucose = L-fuculose. It participates in carbohydrate degradation; L-fucose degradation; L-lactaldehyde and glycerone phosphate from L-fucose: step 1/3. Functionally, converts the aldose L-fucose into the corresponding ketose L-fuculose. This Vibrio vulnificus (strain YJ016) protein is L-fucose isomerase.